We begin with the raw amino-acid sequence, 703 residues long: Methionine--tRNA ligase (703 aa).

The short motif at 12-22 is the 'HIGH' region element; that stretch reads PYANGPLHIGH. 4 residues coordinate Zn(2+): cysteine 143, cysteine 146, cysteine 156, and cysteine 159. The 'KMSKS' region motif lies at 331–335; that stretch reads KMSKT. ATP is bound at residue lysine 334. Low complexity-rich tracts occupy residues 556–568 and 577–594; these read AAPQ…PAKG and EAPA…AAES. 2 disordered regions span residues 556–594 and 682–703; these read AAPQ…AAES and GPGG…SEVK. A tRNA-binding domain is found at 602–703; sequence DFAKVVLKAG…GDVAPGSEVK (102 aa).

Belongs to the class-I aminoacyl-tRNA synthetase family. MetG type 1 subfamily. As to quaternary structure, homodimer. Zn(2+) serves as cofactor.

The protein resides in the cytoplasm. It catalyses the reaction tRNA(Met) + L-methionine + ATP = L-methionyl-tRNA(Met) + AMP + diphosphate. In terms of biological role, is required not only for elongation of protein synthesis but also for the initiation of all mRNA translation through initiator tRNA(fMet) aminoacylation. This Myxococcus xanthus (strain DK1622) protein is Methionine--tRNA ligase.